Consider the following 307-residue polypeptide: Protoheme IX farnesyltransferase (307 aa).

9 helical membrane-spanning segments follow: residues 31–51, 52–72, 102–119, 123–145, 151–171, 179–199, 225–245, 247–267, and 281–301; these read VMSL…YSVH, PFIA…AGAI, ALSF…FMAL, LLAS…IWLK, NIVI…AAVS, VILF…LALF, ILIY…IGMS, FIYL…AGSL, and FVYS…TNTI.

Belongs to the UbiA prenyltransferase family. Protoheme IX farnesyltransferase subfamily.

It localises to the cell inner membrane. The catalysed reaction is heme b + (2E,6E)-farnesyl diphosphate + H2O = Fe(II)-heme o + diphosphate. It functions in the pathway porphyrin-containing compound metabolism; heme O biosynthesis; heme O from protoheme: step 1/1. Functionally, converts heme B (protoheme IX) to heme O by substitution of the vinyl group on carbon 2 of heme B porphyrin ring with a hydroxyethyl farnesyl side group. The chain is Protoheme IX farnesyltransferase from Rickettsia canadensis (strain McKiel).